A 48-amino-acid chain; its full sequence is Osteocalcin (48 aa).

The Gla domain occupies 1 to 46 (SFAVGSSYGAAPDPLEAQREVCELNPDCDELADHIGFQEAYRRFYG). E16, E20, E23, and D29 together coordinate Ca(2+). 4-carboxyglutamate occurs at positions 16, 20, and 23. Residues C22 and C28 are joined by a disulfide bond.

This sequence belongs to the osteocalcin/matrix Gla protein family. Post-translationally, gamma-carboxyglutamate residues are formed by vitamin K dependent carboxylation by GGCX. These residues are essential for the binding of calcium.

It localises to the secreted. Functionally, the carboxylated form is one of the main organic components of the bone matrix, which constitutes 1-2% of the total bone protein. The carboxylated form binds strongly to apatite and calcium. This Dromaius novaehollandiae (Emu) protein is Osteocalcin (BGLAP).